A 105-amino-acid chain; its full sequence is Phosphoribosyl-AMP cyclohydrolase (105 aa).

Aspartate 72 is a binding site for Mg(2+). Cysteine 73 is a Zn(2+) binding site. Positions 74 and 76 each coordinate Mg(2+). Positions 89 and 96 each coordinate Zn(2+).

The protein belongs to the PRA-CH family. As to quaternary structure, homodimer. Mg(2+) serves as cofactor. It depends on Zn(2+) as a cofactor.

The protein localises to the cytoplasm. The enzyme catalyses 1-(5-phospho-beta-D-ribosyl)-5'-AMP + H2O = 1-(5-phospho-beta-D-ribosyl)-5-[(5-phospho-beta-D-ribosylamino)methylideneamino]imidazole-4-carboxamide. The protein operates within amino-acid biosynthesis; L-histidine biosynthesis; L-histidine from 5-phospho-alpha-D-ribose 1-diphosphate: step 3/9. Its function is as follows. Catalyzes the hydrolysis of the adenine ring of phosphoribosyl-AMP. The chain is Phosphoribosyl-AMP cyclohydrolase from Listeria innocua serovar 6a (strain ATCC BAA-680 / CLIP 11262).